The chain runs to 375 residues: MSTAGKVIKCKAAVLWEPKKPFSIEEVEVAPPKAHEVRIKILATGICRSDDHVITGALVRPFPIILGHEAAGVVESVGEGVTSVKPGDKVIPLFVPQCGECSACLSTKGNLCSKNDIGSASGLMPDGTTRFTCKGKAIHHFIGTSTFTEYTVVHETAVAKIAAAAPLEKVCLIGCGFSTGYGAAVQTAKVEPGSTCAVFGLGGVGLSVVMGCKAAGASRIIAIDINKDKFAKAKELGATDCVNPKDFTKPIHEVLMEMTGLGVDYSFEVIGHTETMAAALASCHFNYGVSVILGVPPAAEKISFDPMLLFSGRTWKGSVFGGWKSKDAVPKLVADYMEKKFVLEPLITHTLPFIKINEGFDLLRKGKSIRSVLVF.

Position 2 is an N-acetylserine (Ser-2). Residues Cys-47, His-68, Cys-98, Cys-101, Cys-104, Cys-112, and Cys-175 each coordinate Zn(2+). NAD(+)-binding positions include 200 to 205, Asp-224, Lys-229, 293 to 295, and Arg-370; these read GLGGVG and LGV.

The protein belongs to the zinc-containing alcohol dehydrogenase family. Class-I subfamily. In terms of assembly, homodimer. The cofactor is Zn(2+).

It is found in the cytoplasm. It catalyses the reaction a primary alcohol + NAD(+) = an aldehyde + NADH + H(+). The catalysed reaction is a secondary alcohol + NAD(+) = a ketone + NADH + H(+). This is Alcohol dehydrogenase 1 (ADH1) from Apteryx australis (Southern brown kiwi).